Consider the following 365-residue polypeptide: 2-aminoethylphosphonate--pyruvate transaminase (365 aa).

Lysine 194 bears the N6-(pyridoxal phosphate)lysine mark.

The protein belongs to the class-V pyridoxal-phosphate-dependent aminotransferase family. PhnW subfamily. As to quaternary structure, homodimer. The cofactor is pyridoxal 5'-phosphate.

It catalyses the reaction (2-aminoethyl)phosphonate + pyruvate = phosphonoacetaldehyde + L-alanine. In terms of biological role, involved in phosphonate degradation. In Bacillus cytotoxicus (strain DSM 22905 / CIP 110041 / 391-98 / NVH 391-98), this protein is 2-aminoethylphosphonate--pyruvate transaminase.